The chain runs to 122 residues: Large ribosomal subunit protein uL14 (122 aa).

The protein belongs to the universal ribosomal protein uL14 family. As to quaternary structure, part of the 50S ribosomal subunit. Forms a cluster with proteins L3 and L19. In the 70S ribosome, L14 and L19 interact and together make contacts with the 16S rRNA in bridges B5 and B8.

In terms of biological role, binds to 23S rRNA. Forms part of two intersubunit bridges in the 70S ribosome. The protein is Large ribosomal subunit protein uL14 of Hahella chejuensis (strain KCTC 2396).